A 2684-amino-acid chain; its full sequence is Probable polyketide synthase 27 (2684 aa).

The Ketosynthase family 3 (KS3) domain occupies 11–442 (CGDVAIIGIG…GSNVCLILSE (432 aa)). Active-site for beta-ketoacyl synthase activity residues include cysteine 183, histidine 322, and histidine 365. Residues 650 to 683 (GVSADIIVGHSLGEMSSSYSSGMIDFETLCYLIY) form an acyl/malonyl transferases region. The active-site For acyl/malonyl transferase activity is the serine 660. The segment at 958–1087 (HEKITSEGPP…GNFSLFKHNS (130 aa)) is N-terminal hotdog fold. Residues 958-1276 (HEKITSEGPP…CTSVSLVNPR (319 aa)) enclose the PKS/mFAS DH domain. The active-site Proton acceptor; for dehydratase activity is histidine 999. Residues 1104–1276 (NFTTISKQEF…CTSVSLVNPR (173 aa)) are C-terminal hotdog fold. The active-site Proton donor; for dehydratase activity is aspartate 1173. The interval 1202–1221 (IPSSSSSSKDDNDCDSNNNN) is disordered. The Carrier domain maps to 2585 to 2662 (SDNEFIHSTI…QSIDIIKFGY (78 aa)). An O-(pantetheine 4'-phosphoryl)serine modification is found at serine 2622.

The cofactor is pantetheine 4'-phosphate.

Functionally, probable polyketide synthase. The chain is Probable polyketide synthase 27 (pks27) from Dictyostelium discoideum (Social amoeba).